The following is a 422-amino-acid chain: Ena/VASP-like protein (422 aa).

A WH1 domain is found at 4–118; sequence FEEFSEQSIC…NAMLFALNIM (115 aa). Positions 120–135 are enriched in polar residues; sequence SQEGGPSSQRQVQNGP. Disordered regions lie at residues 120–139 and 147–375; these read SQEGGPSSQRQVQNGPSPDE and VMEQ…PAGS. The residue at position 136 (Ser136) is a Phosphoserine. Residues 147-163 show a composition bias toward basic and acidic residues; that stretch reads VMEQHQQQRQESLERRT. Low complexity predominate over residues 175-186; sequence PSSAASAPVSCS. Positions 187 to 212 are enriched in pro residues; it reads GPPPPPPPPVPPPPTGATPPPPPPLP. The segment at 228–248 is EVH2 block A; it reads GLAAAIAGAKLRRVQRPEDAS. The EVH2 stretch occupies residues 228–419; it reads GLAAAIAGAK…DAIRQELSGI (192 aa). Positions 237 to 240 match the KLKR motif; that stretch reads KLRR. Residues 248–259 are compositionally biased toward low complexity; the sequence is SGGSSPSGTSKS. Phosphoserine is present on residues Ser252 and Ser265. The interval 271–288 is EVH2 block B; the sequence is GGLMEEMNKLLAKRRKAA. A compositionally biased stretch (polar residues) spans 305–326; sequence EDPSTSPSPGTRAASQPPNSSE. 8 positions are modified to phosphoserine: Ser310, Ser312, Ser335, Ser337, Ser347, Ser355, Ser360, and Ser375. The span at 327-337 shows a compositional bias: basic and acidic residues; sequence AGRKPWERSNS. The interval 348-368 is required for interaction with ZDHHC17; sequence RTPSVAKSPEAKSPLQSQPHS. The tract at residues 385–419 is EVH2 block C; that stretch reads DLDRMKQEILEEVVRELHKVKDEIIDAIRQELSGI. Positions 388-414 form a coiled coil; it reads RMKQEILEEVVRELHKVKDEIIDAIRQ.

Belongs to the Ena/VASP family. Homotetramer. Binds to the SH3 domains of ABL1, LYN and SRC. Also binds to profilin, with preference for isoform IIa of PFN2, and the WW domain of APBB1/FE65. Binds to SEMA6A. Interacts, via the Pro-rich region, with the C-terminal SH3 domain of DNMBP. Interacts with RAPH1. Binds, via the EVH1 domain, the Pro-rich domain of Listeria monocytogenes actA. Binds, via the EVH1 domain, the Pro-rich domain of ZYX. Interacts with FYB1. Interacts with ZDHHC17. Post-translationally, phosphorylated by PKA; phosphorylation abolishes binding to SH3 domains of ABL and SRC.

It localises to the cytoplasm. The protein localises to the cytoskeleton. The protein resides in the stress fiber. It is found in the cell projection. Its subcellular location is the lamellipodium. Functionally, ena/VASP proteins are actin-associated proteins involved in a range of processes dependent on cytoskeleton remodeling and cell polarity such as axon guidance and lamellipodial and filopodial dynamics in migrating cells. EVL enhances actin nucleation and polymerization. In Pongo abelii (Sumatran orangutan), this protein is Ena/VASP-like protein (EVL).